Consider the following 357-residue polypeptide: Alanine racemase, catabolic (357 aa).

The active-site Proton acceptor; specific for D-alanine is the Lys33. Residue Lys33 is modified to N6-(pyridoxal phosphate)lysine. Lys122 carries the post-translational modification N6-carboxylysine. Arg129 lines the substrate pocket. The active-site Proton acceptor; specific for L-alanine is the Tyr253. Substrate is bound at residue Met301.

This sequence belongs to the alanine racemase family. As to quaternary structure, homodimer. Pyridoxal 5'-phosphate serves as cofactor.

The enzyme catalyses L-alanine = D-alanine. Isomerizes L-alanine to D-alanine which is then oxidized to pyruvate by DadA. This is Alanine racemase, catabolic from Pseudomonas aeruginosa (strain ATCC 15692 / DSM 22644 / CIP 104116 / JCM 14847 / LMG 12228 / 1C / PRS 101 / PAO1).